The primary structure comprises 1333 residues: MKVTVCFGRTRVVVPCGDGRMKVFSLIQQAVTRYRKAVAKDPNYWIQVHRLEHGDGGILDLDDILCDVADDKDRLVAVFDEQDPHHGGDGTSASFTGTQSPEIFGSELGTNNVSAFQPYQATSEIEVTPSVLRANMPLHVRRSSDPALTGLSTSVSDNNFSSEEPSRKNPTRWSTTAGFLKQNTAGSPKTCDRKKDENYRSLPRDPSSWSNQFQRDNARSSLSASHPMVDRWLEKQEQDEEGTEEDSSRVEPVGHADTGLENMPNFSLDDMVKLVQVPNDGGPLGIHVVPFSARGGRTLGLLVKRLEKGGKAEQENLFHENDCIVRINDGDLRNRRFEQAQHMFRQAMRARVIWFHVVPAANKEQYEQLSQREKNNYSPGRFSPDSHCVANRSVANNAPQALPRAPRLSQPPEQLDAHPRLPHSAHASTKPPAAPALAPPSVLSTNVGSVYNTKKVGKRLNIQLKKGTEGLGFSITSRDVTIGGSAPIYVKNILPRGAAIQDGRLKAGDRLIEVNGVDLAGKSQEEVVSLLRSTKMEGTVSLLVFRQEEAFHPREMNAEPSQMQTPKETKAEDEDVVLTPDGTREFLTFEVPLNDSGSAGLGVSVKGNRSKENHADLGIFVKSIINGGAASKDGRLRVNDQLIAVNGESLLGKANQEAMETLRRSMSTEGNKRGMIQLIVARRISRCNELRSPGSPAAPELPIETELDDRERRISHSLYSGIEGLDESPTRNAALSRIMGKCQLSPTVNMPHDDTVMIEDDRLPVLPPHLSDQSSSSSHDDVGFIMTEAGTWAKATISDSADCSLSPDVDPVLAFQREGFGRQSMSEKRTKQFSDASQLDFVKTRKSKSMDLVADETKLNTVDDQRAGSPSRDVGPSLGLKKSSSLESLQTAVAEVTLNGNIPFHRPRPRIIRGRGCNESFRAAIDKSYDKPMVDDDDEGMETLEEDTEESSRSGRESVSTSSDQPSYSLERQMNGDPEKRDKTERKKDKAGKDKKKDREKEKDKLKAKKGMLKGLGDMFRFGKHRKDDKMEKMGRIKIQDSFTSEEDRVRMKEEQERIQAKTREFRERQARERDYAEIQDFHRTFGCDDELLYGGMSSYEGCLALNARPQSPREGHLMDTLYAQVKKPRSSKPGDSNRSTPSNHDRIQRLRQEFQQAKQDEDVEDRRRTYSFEQSWSSSRPASQSGRHSVSVEVQVQRQRQEERESFQQAQRQYSSLPRQSRKNASSISQDSWEQNYAPGEGFQSAKENPRYSSYQGSRNGYLGGHGFNARVMLETQELLRQEQRRKEQQLKKQPPADGVRGPFRQDVPPSPSQVARLNRLQTPEKGRPFYS.

Ser25 is modified (phosphoserine). Phosphothreonine is present on Thr91. Residues 143–262 are disordered; that stretch reads SSDPALTGLS…VGHADTGLEN (120 aa). Composition is skewed to polar residues over residues 150-163 and 171-187; these read GLST…FSSE and TRWS…TAGS. A phosphoserine mark is found at Ser156 and Ser174. Over residues 190–203 the composition is skewed to basic and acidic residues; that stretch reads TCDRKKDENYRSLP. Residues 207 to 224 show a composition bias toward polar residues; the sequence is SSWSNQFQRDNARSSLSA. A PDZ 1 domain is found at 271-359; it reads MVKLVQVPND…ARVIWFHVVP (89 aa). 2 disordered regions span residues 369–388 and 397–441; these read LSQR…DSHC and NAPQ…APPS. The residue at position 383 (Ser383) is a Phosphoserine. PDZ domains follow at residues 461-546 and 590-677; these read NIQL…LVFR and EVPL…GMIQ. At Tyr489 the chain carries Phosphotyrosine. Residues Ser692, Ser695, Ser715, Ser728, Ser806, and Ser824 each carry the phosphoserine modification. 2 interaction with PRKCI and PRKCZ regions span residues 712 to 932 and 712 to 936; these read RRIS…YDKP and RRIS…MVDD. An N6-acetyllysine modification is found at Lys831. The residue at position 834 (Ser834) is a Phosphoserine. Residue Lys848 is modified to N6-acetyllysine. Phosphoserine is present on residues Ser849 and Ser869. 5 disordered regions span residues 861 to 884, 928 to 1011, 1024 to 1071, 1110 to 1267, and 1283 to 1333; these read TVDD…KKSS, SYDK…AKKG, KHRK…ERQA, PQSP…LGGH, and QEQR…PFYS. N6-acetyllysine is present on Lys881. Residues 931-1333 form an interaction with FRMD4A region; that stretch reads KPMVDDDDEG…TPEKGRPFYS (403 aa). Residues 935-949 are compositionally biased toward acidic residues; sequence DDDDEGMETLEEDTE. Ser958 is modified (phosphoserine; by AURKA). Phosphoserine occurs at positions 967 and 969. 2 stretches are compositionally biased toward basic and acidic residues: residues 977–1005 and 1026–1039; these read DPEK…EKDK and RKDD…RIKI. A Phosphoserine modification is found at Ser1042. The span at 1046 to 1071 shows a compositional bias: basic and acidic residues; the sequence is EEDRVRMKEEQERIQAKTREFRERQA. Residues 1046–1078 adopt a coiled-coil conformation; sequence EEDRVRMKEEQERIQAKTREFRERQARERDYAE. A compositionally biased stretch (polar residues) spans 1134 to 1143; it reads PGDSNRSTPS. The segment covering 1144 to 1171 has biased composition (basic and acidic residues); sequence NHDRIQRLRQEFQQAKQDEDVEDRRRTY. 3 coiled-coil regions span residues 1145–1168, 1195–1218, and 1274–1295; these read HDRI…EDRR, VQVQ…YSSL, and MLET…LKKQ. The span at 1176–1199 shows a compositional bias: low complexity; the sequence is SWSSSRPASQSGRHSVSVEVQVQR. Residues 1215-1236 are compositionally biased toward polar residues; sequence YSSLPRQSRKNASSISQDSWEQ. The span at 1283 to 1292 shows a compositional bias: basic and acidic residues; that stretch reads QEQRRKEQQL. Over residues 1314–1323 the composition is skewed to polar residues; the sequence is SQVARLNRLQ. Basic and acidic residues predominate over residues 1324-1333; that stretch reads TPEKGRPFYS. Lys1327 bears the N6-acetyllysine mark.

Belongs to the PAR3 family. Interacts with PRCKI and CDH5. Interacts (via PDZ 3 domain) with PTEN (via C-terminus). Component of a complex whose core is composed of ARHGAP17, AMOT, PALS1, PATJ and PARD3/PAR3. Interacts with LIMK2, AURKA and AURKB. Component of the Par polarity complex, composed of at least phosphorylated PRKCZ, PARD3 and TIAM1. Interacts with ECT2 and FBF1. Interacts (via PDZ 1 domain) with F11R/JAM1, PARD6A and PARD6B. Part of a complex with PARD6A or PARD6B, PRKCI or PRKCZ and CDC42 or RAC1. Directly interacts with TIAM1 and TIAM2. Interacts with SIRT2. Interacts (via coiled-coil domain) with FRMD4A. Found in a complex with PARD3, CYTH1 and FRMD4A. Interacts with SAPCD2. Interacts with PRKCA. As to quaternary structure, interacts with PRKCZ. In terms of processing, acetylated. Deacetylated by SIRT2, thereby inhibiting Schwann cell peripheral myelination. Post-translationally, phosphorylation at Ser-824 by PRKCZ and PRKCI occurs at the most apical tip of epithelial cell-cell contacts during the initial phase of tight junction formation and may promote dissociation of the complex with PARD6. EGF-induced Tyr-1123 phosphorylation mediates dissociation from LIMK2. Phosphorylation by AURKA at Ser-958 is required for the normal establishment of neuronal polarity. Isoform 4 and isoform 5 are phosphorylated during oocyte maturation. In terms of tissue distribution, all isoforms are expressed in heart, while expression in brain is mainly limited to isoform 1, and to isoform 3 to a weaker level.

The protein resides in the cytoplasm. The protein localises to the endomembrane system. It is found in the cell junction. Its subcellular location is the tight junction. It localises to the adherens junction. The protein resides in the cell cortex. The protein localises to the cytoskeleton. It is found in the cell membrane. In terms of biological role, adapter protein involved in asymmetrical cell division and cell polarization processes. Seems to play a central role in the formation of epithelial tight junctions. Targets the phosphatase PTEN to cell junctions. Association with PARD6B may prevent the interaction of PARD3 with F11R/JAM1, thereby preventing tight junction assembly. The PARD6-PARD3 complex links GTP-bound Rho small GTPases to atypical protein kinase C proteins. Required for establishment of neuronal polarity and normal axon formation in cultured hippocampal neurons. Involved in Schwann cell peripheral myelination. This Mus musculus (Mouse) protein is Partitioning defective 3 homolog (Pard3).